The chain runs to 231 residues: AA9 family lytic polysaccharide monooxygenase F (231 aa).

An N-terminal signal peptide occupies residues 1–17 (MLPSISLLLAAALGTSA). Positions 18, 50, and 89 each coordinate Cu(2+). Asp-50 serves as a coordination point for O2. Disulfide bonds link Cys-59–Cys-177 and Cys-147–Cys-231. O2 is bound by residues His-163 and Gln-172. Tyr-174 contacts Cu(2+).

It belongs to the polysaccharide monooxygenase AA9 family. The cofactor is Cu(2+).

Its subcellular location is the secreted. The catalysed reaction is [(1-&gt;4)-beta-D-glucosyl]n+m + reduced acceptor + O2 = 4-dehydro-beta-D-glucosyl-[(1-&gt;4)-beta-D-glucosyl]n-1 + [(1-&gt;4)-beta-D-glucosyl]m + acceptor + H2O.. Its function is as follows. Lytic polysaccharide monooxygenase (LPMO) that depolymerizes crystalline and amorphous polysaccharides via the oxidation of scissile alpha- or beta-(1-4)-glycosidic bonds, yielding C1 oxidation products. Catalysis by LPMOs requires the reduction of the active-site copper from Cu(II) to Cu(I) by a reducing agent and H(2)O(2) or O(2) as a cosubstrate. In Neurospora crassa (strain ATCC 24698 / 74-OR23-1A / CBS 708.71 / DSM 1257 / FGSC 987), this protein is AA9 family lytic polysaccharide monooxygenase F (gh61-6).